A 757-amino-acid chain; its full sequence is MRFNQYSYINFPKENVLSELKKCGFDLQNTANHKDSLETFLRRFFFTYQDTNYPLSILAADKKTDLLTFFQSEDELTADIFYTVAFQLLGFSYLVDFEDSDVFRKETGFPIIYGDLIENLYQLLNTRTKKGNTLIDQLVSDGLIPEDNDYHYFNGKSLATFSNQDVIREVVYVESRVDTDQKGLSDLVKVSIIRPRFDGKIPAIMTASPYHQGTNDKASDKALYKMEGELEVKLPHKIELEKPQLNLVQPQGQAELIAEAEEKLTHINSSYTLNDYFLPRGFANLYVSGVGTKDSTGFMTNGDYQQIEAYKNVIDWLNGRCRAFTDHTRQRQVKADWSNGKVATTGLSYLGTMSNGLATTGVDGLEVIIAEAGISSWYNYYRENGLVTSPGGYPGEDFDSLAELTYSRNLLAGDYIRGNEAHQADLEKVKAQLDRKTGDYNQFWHDRNYLLNAHKVKAEVVFTHGSQDWNVKPLHVYQMFHALPTHIHKHLFFHNGAHVYMNNWQSIDFRESINALLTKKLLGQETDFQLPTVIWQDNTAPQTWLSLDNFGGQENCKTFSLGQEEQAIQNQYPDKDFERYSKTYQTFNTELYQGKANQITINLPVTKDLHLNGRAQLNLRIKSSTNKGLLSAQLLEFGQKKYLQPYPAILSARTIDNGRYHMLENLCELPFRPEAQRVVTKGYLNLQNRNDLLLVEDITADEWMDVQFELQPTIYKLKEGDTLRLVLYTTDFEITIRDNTDYHLTVDLAQSMLTLPC.

Catalysis depends on charge relay system residues Ser348, Asp468, and His498.

The protein belongs to the peptidase S15 family. Homodimer.

Its subcellular location is the cytoplasm. The enzyme catalyses Hydrolyzes Xaa-Pro-|- bonds to release unblocked, N-terminal dipeptides from substrates including Ala-Pro-|-p-nitroanilide and (sequentially) Tyr-Pro-|-Phe-Pro-|-Gly-Pro-|-Ile.. Functionally, removes N-terminal dipeptides sequentially from polypeptides having unsubstituted N-termini provided that the penultimate residue is proline. This chain is Xaa-Pro dipeptidyl-peptidase, found in Streptococcus pneumoniae (strain P1031).